Reading from the N-terminus, the 343-residue chain is Mas-related G-protein coupled receptor member F (343 aa).

The Extracellular segment spans residues 1-44 (MAGNCSWEAHPGNRNKMCPGLSEAPELYSRGFLTIEQIAMLPPP). Asn4 is a glycosylation site (N-linked (GlcNAc...) asparagine). A helical transmembrane segment spans residues 45–66 (AVMNYIFLLLCLCGLVGNGLVL). Residues 67 to 82 (WFFGFSIKRNPFSIYF) are Cytoplasmic-facing. A helical membrane pass occupies residues 83 to 104 (LHLASADVGYLFSKAVFSILNT). At 105-123 (GGFLGTFADYIRSVCRVLG) the chain is on the extracellular side. A helical transmembrane segment spans residues 124-144 (LCMFLTGVSLLPAVSAERCAS). Over 145-160 (VIFPAWYWRRRPKRLS) the chain is Cytoplasmic. A helical membrane pass occupies residues 161 to 181 (AVVCALLWVLSLLVTCLHNYF). Residues 182–198 (CVFLGRGAPGAACRHMD) are Extracellular-facing. Residues 199-220 (IFLGILLFLLCCPLMVLPCLAL) form a helical membrane-spanning segment. Residues 221–241 (ILHVECRARRRQRSAKLNHVI) lie on the Cytoplasmic side of the membrane. The chain crosses the membrane as a helical span at residues 242 to 263 (LAMVSVFLVSSIYLGIDWFLFW). Residues 264-273 (VFQIPAPFPE) are Extracellular-facing. The helical transmembrane segment at 274–294 (YVTDLCICINSSAKPIVYFLA) threads the bilayer. Topologically, residues 295–343 (GRDKSQRLWEPLRVVFQRALRDGAELGEAGGSTPNTVTMEMQCPPGNAS) are cytoplasmic. Positions 320 to 343 (LGEAGGSTPNTVTMEMQCPPGNAS) are disordered.

This sequence belongs to the G-protein coupled receptor 1 family. Mas subfamily.

The protein resides in the cell membrane. Orphan receptor. May bind to a neuropeptide and may regulate nociceptor function and/or development, including the sensation or modulation of pain. This is Mas-related G-protein coupled receptor member F (MRGPRF) from Homo sapiens (Human).